Reading from the N-terminus, the 240-residue chain is Zein-alpha 19C2 (240 aa).

Positions 1–21 are cleaved as a signal peptide; the sequence is MATKIFSLLMLLALSTCVANA.

Belongs to the zein family. In terms of assembly, interacts with OP10 (via N-terminus).

In terms of biological role, zeins are major seed storage proteins. This chain is Zein-alpha 19C2, found in Zea mays (Maize).